Reading from the N-terminus, the 253-residue chain is Methionine aminopeptidase (253 aa).

His78 provides a ligand contact to substrate. Positions 95, 106, and 169 each coordinate a divalent metal cation. His176 serves as a coordination point for substrate. The a divalent metal cation site is built by Glu206 and Glu237.

Belongs to the peptidase M24A family. Methionine aminopeptidase type 1 subfamily. Monomer. Co(2+) is required as a cofactor. It depends on Zn(2+) as a cofactor. Mn(2+) serves as cofactor. The cofactor is Fe(2+).

The enzyme catalyses Release of N-terminal amino acids, preferentially methionine, from peptides and arylamides.. Removes the N-terminal methionine from nascent proteins. The N-terminal methionine is often cleaved when the second residue in the primary sequence is small and uncharged (Met-Ala-, Cys, Gly, Pro, Ser, Thr, or Val). Requires deformylation of the N(alpha)-formylated initiator methionine before it can be hydrolyzed. The chain is Methionine aminopeptidase from Helicobacter pylori (strain ATCC 700392 / 26695) (Campylobacter pylori).